The chain runs to 344 residues: Transcription factor JunB (344 aa).

Glycyl lysine isopeptide (Lys-Gly) (interchain with G-Cter in SUMO2) cross-links involve residues K4, K33, and K36. A compositionally biased stretch (gly residues) spans 51 to 65 (KGPGARGPGPEGSGA). The segment at 51–75 (KGPGARGPGPEGSGAGSYFSGQGSD) is disordered. Residue K81 forms a Glycyl lysine isopeptide (Lys-Gly) (interchain with G-Cter in SUMO2) linkage. A phosphothreonine mark is found at T102 and T104. At S117 the chain carries Phosphoserine. K138 participates in a covalent cross-link: Glycyl lysine isopeptide (Lys-Gly) (interchain with G-Cter in SUMO2). Disordered regions lie at residues 181 to 202 (NLSSYSPASAPSGGSGTAVGTG) and 237 to 257 (KEEPQTVPEARSRDATPPVSP). A compositionally biased stretch (low complexity) spans 183–192 (SSYSPASAPS). The residue at position 237 (K237) is an N6-acetyllysine; alternate. Residue K237 forms a Glycyl lysine isopeptide (Lys-Gly) (interchain with G-Cter in SUMO1); alternate linkage. A Glycyl lysine isopeptide (Lys-Gly) (interchain with G-Cter in SUMO2); alternate cross-link involves residue K237. A compositionally biased stretch (basic and acidic residues) spans 237–250 (KEEPQTVPEARSRD). S248 is modified (phosphoserine). T252 carries the post-translational modification Phosphothreonine. S256 carries the post-translational modification Phosphoserine. The segment at 265-292 (RIKVERKRLRNRLAATKCRKRKLERIAR) is basic motif. In terms of domain architecture, bZIP spans 265–328 (RIKVERKRLR…AQLKQKVMTH (64 aa)). The tract at residues 293–321 (LEDKVKTLKAENAGLSSAAGLLREQVAQL) is leucine-zipper. Residue K340 forms a Glycyl lysine isopeptide (Lys-Gly) (interchain with G-Cter in SUMO2) linkage.

Belongs to the bZIP family. Jun subfamily. Binds DNA as a homodimer or as a heterodimer with another member of the Jun/Fos family. Component of an AP-1 transcription factor complex composed of JUN-FOS heterodimers. As part of the AP-1 transcription factor complex, forms heterodimers with FOSB, thereby binding to the AP-1 consensus sequence and stimulating transcription. Interacts with NFE2 (via its WW domains). Post-translationally, ubiquitinated by ITCH, leading to its degradation.

The protein resides in the nucleus. Functionally, transcription factor involved in regulating gene activity following the primary growth factor response. Binds to the DNA sequence 5'-TGA[GC]TCA-3'. Heterodimerizes with proteins of the FOS family to form an AP-1 transcription complex, thereby enhancing its DNA binding activity to an AP-1 consensus sequence 5'-TGA[GC]TCA-3' and enhancing its transcriptional activity. This Mus musculus (Mouse) protein is Transcription factor JunB (Junb).